A 97-amino-acid chain; its full sequence is uncharacterized protein (97 aa).

Residues 72–97 (TVERKRSEHTNSRKKDPSAYTWSDVK) are disordered. A compositionally biased stretch (basic and acidic residues) spans 73 to 88 (VERKRSEHTNSRKKDP).

The protein belongs to the chlamydial CPn_0121/CT_031/TC_0300 family.

This is an uncharacterized protein from Chlamydia pneumoniae (Chlamydophila pneumoniae).